We begin with the raw amino-acid sequence, 882 residues long: Translation initiation factor IF-2 (882 aa).

Polar residues-rich tracts occupy residues 38–56, 97–124, and 140–192; these read NDSN…AEYS, GGYS…YSQN, and GGYS…NRDS. Disordered stretches follow at residues 38-192 and 236-274; these read NDSN…NRDS and STPA…AETE. Residues 243–259 show a composition bias toward basic and acidic residues; it reads ENSKELNRKLGEKKKQQ. Residues 380–553 form the tr-type G domain; the sequence is EKPPVITIMG…DMMLLKANPS (174 aa). The segment at 389-396 is G1; sequence GHVDHGKT. 389-396 contacts GTP; the sequence is GHVDHGKT. The G2 stretch occupies residues 414-418; that stretch reads GITQH. The segment at 435–438 is G3; sequence DTPG. GTP is bound by residues 435 to 439 and 489 to 492; these read DTPGH and NKID. Residues 489–492 are G4; it reads NKID. Residues 525-527 are G5; sequence SAL.

The protein belongs to the TRAFAC class translation factor GTPase superfamily. Classic translation factor GTPase family. IF-2 subfamily.

The protein resides in the cytoplasm. Its function is as follows. One of the essential components for the initiation of protein synthesis. Protects formylmethionyl-tRNA from spontaneous hydrolysis and promotes its binding to the 30S ribosomal subunits. Also involved in the hydrolysis of GTP during the formation of the 70S ribosomal complex. In Borreliella burgdorferi (strain ATCC 35210 / DSM 4680 / CIP 102532 / B31) (Borrelia burgdorferi), this protein is Translation initiation factor IF-2 (infB).